We begin with the raw amino-acid sequence, 209 residues long: Large ribosomal subunit protein uL3 (209 aa).

The segment at 121–154 (GGIKRHNFHRGPMAHGSKYHRRPGSSAAKGPART) is disordered.

It belongs to the universal ribosomal protein uL3 family. In terms of assembly, part of the 50S ribosomal subunit. Forms a cluster with proteins L14 and L19.

Functionally, one of the primary rRNA binding proteins, it binds directly near the 3'-end of the 23S rRNA, where it nucleates assembly of the 50S subunit. This chain is Large ribosomal subunit protein uL3, found in Desulforamulus reducens (strain ATCC BAA-1160 / DSM 100696 / MI-1) (Desulfotomaculum reducens).